The chain runs to 283 residues: ATP phosphoribosyltransferase (283 aa).

Belongs to the ATP phosphoribosyltransferase family. Long subfamily. The cofactor is Mg(2+).

The protein localises to the cytoplasm. It carries out the reaction 1-(5-phospho-beta-D-ribosyl)-ATP + diphosphate = 5-phospho-alpha-D-ribose 1-diphosphate + ATP. The protein operates within amino-acid biosynthesis; L-histidine biosynthesis; L-histidine from 5-phospho-alpha-D-ribose 1-diphosphate: step 1/9. With respect to regulation, feedback inhibited by histidine. Functionally, catalyzes the condensation of ATP and 5-phosphoribose 1-diphosphate to form N'-(5'-phosphoribosyl)-ATP (PR-ATP). Has a crucial role in the pathway because the rate of histidine biosynthesis seems to be controlled primarily by regulation of HisG enzymatic activity. The polypeptide is ATP phosphoribosyltransferase (Rhodococcus opacus (strain B4)).